The primary structure comprises 456 residues: RuvB-like helicase 1 (456 aa).

70-77 is a binding site for ATP; it reads GPPGTGKT.

The protein belongs to the RuvB family. Forms homohexameric rings. May form a dodecamer with rept made of two stacked hexameric rings. Component of the chromatin remodeling Ino80 complex.

The protein localises to the nucleus. The catalysed reaction is ATP + H2O = ADP + phosphate + H(+). Acts as a transcriptional coactivator in Wg signaling. Functionally, proposed core component of the chromatin remodeling Ino80 complex which is involved in transcriptional regulation, DNA replication and probably DNA repair. The chain is RuvB-like helicase 1 from Aedes aegypti (Yellowfever mosquito).